The primary structure comprises 39 residues: Photosystem II reaction center protein L (39 aa).

A helical transmembrane segment spans residues 18–38 (SLYLGLLLVAVLGILFSSYFF).

The protein belongs to the PsbL family. In terms of assembly, PSII is composed of 1 copy each of membrane proteins PsbA, PsbB, PsbC, PsbD, PsbE, PsbF, PsbH, PsbI, PsbJ, PsbK, PsbL, PsbM, PsbT, PsbX, PsbY, PsbZ, Psb30/Ycf12, peripheral proteins PsbO, CyanoQ (PsbQ), PsbU, PsbV and a large number of cofactors. It forms dimeric complexes.

It localises to the cellular thylakoid membrane. Its function is as follows. One of the components of the core complex of photosystem II (PSII). PSII is a light-driven water:plastoquinone oxidoreductase that uses light energy to abstract electrons from H(2)O, generating O(2) and a proton gradient subsequently used for ATP formation. It consists of a core antenna complex that captures photons, and an electron transfer chain that converts photonic excitation into a charge separation. This subunit is found at the monomer-monomer interface and is required for correct PSII assembly and/or dimerization. This is Photosystem II reaction center protein L from Microcystis aeruginosa (strain NIES-843 / IAM M-2473).